A 118-amino-acid chain; its full sequence is DNA-binding protein Msm_0708 (118 aa).

Residues E16–A39 are disordered. Over residues R18–A39 the composition is skewed to low complexity.

This sequence belongs to the PDCD5 family.

The chain is DNA-binding protein Msm_0708 from Methanobrevibacter smithii (strain ATCC 35061 / DSM 861 / OCM 144 / PS).